The following is a 636-amino-acid chain: Amylosucrase (636 aa).

Substrate contacts are provided by Asp-152, His-195, Gln-262, and Arg-292. Asp-294 (nucleophile) is an active-site residue. The active-site Proton donor is the Glu-336. 3 residues coordinate substrate: His-400, Asp-401, and Arg-517.

This sequence belongs to the glycosyl hydrolase 13 family. As to quaternary structure, monomer.

The protein resides in the secreted. The enzyme catalyses [(1-&gt;4)-alpha-D-glucosyl](n) + sucrose = [(1-&gt;4)-alpha-D-glucosyl](n+1) + D-fructose. Amylosucrase favors hydrolysis at low sucrose concentrations, and polymerization at high sucrose concentrations. Competitively inhibited by fructose. Functionally, catalyzes the synthesis of alpha-glucan from sucrose. Catalyzes, in addition, sucrose hydrolysis, maltose and maltotriose synthesis by successive transfers of the glucosyl moiety of sucrose onto the released glucose, and finally turanose and trehalulose synthesis, these two sucrose isomers being obtained by glucosyl transfer onto fructose. The polypeptide is Amylosucrase (ams) (Neisseria polysaccharea).